The chain runs to 337 residues: Tryptophan--tRNA ligase (337 aa).

ATP is bound by residues 9–11 (RPT) and 17–18 (GH). The 'HIGH' region signature appears at 10–18 (PTGRLHLGH). D137 contributes to the L-tryptophan binding site. ATP contacts are provided by residues 149–151 (GKD), L187, and 195–199 (KMSKS). Residues 195 to 199 (KMSKS) carry the 'KMSKS' region motif.

It belongs to the class-I aminoacyl-tRNA synthetase family. Homodimer.

The protein resides in the cytoplasm. It catalyses the reaction tRNA(Trp) + L-tryptophan + ATP = L-tryptophyl-tRNA(Trp) + AMP + diphosphate + H(+). Functionally, catalyzes the attachment of tryptophan to tRNA(Trp). The sequence is that of Tryptophan--tRNA ligase from Treponema pallidum (strain Nichols).